We begin with the raw amino-acid sequence, 394 residues long: Cell division protein FtsZ (394 aa).

GTP is bound by residues 21 to 25 (GGGNN), 108 to 110 (GTG), Glu139, Arg143, and Asp187. Positions 317-394 (DKPSSQGRKA…EERRSRRTRR (78 aa)) are disordered. Composition is skewed to low complexity over residues 328 to 346 (STGFGSSVNSSSNHQSGAS) and 353 to 364 (SAHTSHSQSSES). The segment covering 365-388 (VNERSHTTKDDDIPSFIRNREERR) has biased composition (basic and acidic residues).

Belongs to the FtsZ family. As to quaternary structure, homodimer. Polymerizes to form a dynamic ring structure in a strictly GTP-dependent manner. Interacts directly with several other division proteins.

The protein resides in the cytoplasm. In terms of biological role, essential cell division protein that forms a contractile ring structure (Z ring) at the future cell division site. The regulation of the ring assembly controls the timing and the location of cell division. One of the functions of the FtsZ ring is to recruit other cell division proteins to the septum to produce a new cell wall between the dividing cells. Binds GTP and shows GTPase activity. The chain is Cell division protein FtsZ from Staphylococcus epidermidis (strain ATCC 12228 / FDA PCI 1200).